The sequence spans 370 residues: uncharacterized protein (370 aa).

Lysine 207 carries the post-translational modification N6-(pyridoxal phosphate)lysine.

It belongs to the class-V pyridoxal-phosphate-dependent aminotransferase family. The cofactor is pyridoxal 5'-phosphate.

This is an uncharacterized protein from Bacillus subtilis (strain 168).